Consider the following 108-residue polypeptide: UPF0235 protein RPB_0109 (108 aa).

Belongs to the UPF0235 family.

The sequence is that of UPF0235 protein RPB_0109 from Rhodopseudomonas palustris (strain HaA2).